Here is a 386-residue protein sequence, read N- to C-terminus: L-olivosyl-oleandolide 3-O-methyltransferase (386 aa).

S-adenosyl-L-methionine contacts are provided by residues Ser-166, 195 to 201 (EIGIGGY), Ser-210, Asp-227, 245 to 246 (RQ), and Asp-268. Asp-268 lines the Mg(2+) pocket. His-271 serves as the catalytic Proton acceptor. 2 residues coordinate Mg(2+): Glu-296 and Asp-297. The tract at residues 364 to 386 (RRAINKEGGIPHTVPREPFWNDN) is disordered.

The protein belongs to the methyltransferase OleY/MycE family. In terms of assembly, homodimer. Mg(2+) serves as cofactor.

The catalysed reaction is L-olivosyl-oleandolide + S-adenosyl-L-methionine = L-oleandrosyl-oleandolide + S-adenosyl-L-homocysteine + H(+). It participates in antibiotic biosynthesis. Functionally, 3-O-methyltransferase involved in the synthesis of L-oleandrose, a sugar attached to oleandomycin, a macrolide antibiotic. Acts on monoglycosylated macrolactones and mediates the conversion of L-olivosyl-erythronolide B into its 3-O-methylated derivative, L-oleandrosyl-erythronolide B. Also able to methylate other monoglycosylated derivatives, such as L-rhamnosyl- and L-mycarosyl-erythronolide B. The polypeptide is L-olivosyl-oleandolide 3-O-methyltransferase (oleY) (Streptomyces antibioticus).